Consider the following 281-residue polypeptide: Nucleotide-binding protein Tpet_1006 (281 aa).

9–16 (GLSGAGKT) contacts ATP. 58-61 (DVRS) is a binding site for GTP.

Belongs to the RapZ-like family.

Its function is as follows. Displays ATPase and GTPase activities. In Thermotoga petrophila (strain ATCC BAA-488 / DSM 13995 / JCM 10881 / RKU-1), this protein is Nucleotide-binding protein Tpet_1006.